The chain runs to 147 residues: Cyanate hydratase (147 aa).

Catalysis depends on residues Arg88, Glu91, and Ser114.

This sequence belongs to the cyanase family.

It carries out the reaction cyanate + hydrogencarbonate + 3 H(+) = NH4(+) + 2 CO2. Its function is as follows. Catalyzes the reaction of cyanate with bicarbonate to produce ammonia and carbon dioxide. This chain is Cyanate hydratase, found in Variovorax paradoxus (strain S110).